Here is a 362-residue protein sequence, read N- to C-terminus: 2-aminoethylphosphonate--pyruvate transaminase (362 aa).

At Lys193 the chain carries N6-(pyridoxal phosphate)lysine.

The protein belongs to the class-V pyridoxal-phosphate-dependent aminotransferase family. PhnW subfamily. As to quaternary structure, homodimer. The cofactor is pyridoxal 5'-phosphate.

It catalyses the reaction (2-aminoethyl)phosphonate + pyruvate = phosphonoacetaldehyde + L-alanine. Functionally, involved in phosphonate degradation. The polypeptide is 2-aminoethylphosphonate--pyruvate transaminase (Bacteroides fragilis (strain ATCC 25285 / DSM 2151 / CCUG 4856 / JCM 11019 / LMG 10263 / NCTC 9343 / Onslow / VPI 2553 / EN-2)).